A 188-amino-acid chain; its full sequence is FMN-dependent NADPH-azoreductase (188 aa).

The protein belongs to the azoreductase type 2 family. As to quaternary structure, homotetramer. Requires FMN as cofactor.

Catalyzes the reductive cleavage of azo bond in aromatic azo compounds to the corresponding amines. Requires NADPH, but not NADH, as an electron donor for its activity. This chain is FMN-dependent NADPH-azoreductase (azo1), found in Staphylococcus epidermidis (strain ATCC 12228 / FDA PCI 1200).